A 313-amino-acid chain; its full sequence is MNVGIKGFGAYAPKNIIDNAYFEQFLETSDEWISKMTGIKERHWADEDQDTSDLAYNASIKAIEDAGIQPVDIDMIIVATATGDMPFPSVANILQERLGTGKVATMDQLAACSGFMYSMITAKQYIQSGDYKHILVVGADKLSKITDMTDRSTAVLFGDGAGAVVMGEVAEGRGIISYEMGSDGSGGKYLYLDRETGKLKMNGREVFKFAVRIMGDASTRVVEKAGLSSEDIDLFVPHQANIRIMESARERLGIEREKMSVSVNKYGNTSAASIPLSINQELQNGKIKDDDTLVLVGFGGGLTWGAIVIKWGK.

Catalysis depends on residues C112 and H238. Residues 239-243 (QANIR) form an ACP-binding region. Residue N268 is part of the active site.

This sequence belongs to the thiolase-like superfamily. FabH family. As to quaternary structure, homodimer.

The protein localises to the cytoplasm. The catalysed reaction is malonyl-[ACP] + acetyl-CoA + H(+) = 3-oxobutanoyl-[ACP] + CO2 + CoA. It participates in lipid metabolism; fatty acid biosynthesis. Its function is as follows. Catalyzes the condensation reaction of fatty acid synthesis by the addition to an acyl acceptor of two carbons from malonyl-ACP. Catalyzes the first condensation reaction which initiates fatty acid synthesis and may therefore play a role in governing the total rate of fatty acid production. Possesses both acetoacetyl-ACP synthase and acetyl transacylase activities. Its substrate specificity determines the biosynthesis of branched-chain and/or straight-chain of fatty acids. The polypeptide is Beta-ketoacyl-[acyl-carrier-protein] synthase III (Staphylococcus epidermidis (strain ATCC 35984 / DSM 28319 / BCRC 17069 / CCUG 31568 / BM 3577 / RP62A)).